The chain runs to 177 residues: Superoxide dismutase [Cu-Zn] 1 (177 aa).

A signal peptide spans 1–20; it reads MKYTILSLVAGALISCSAMA. Residues His69, His71, and His94 each contribute to the Cu cation site. The cysteines at positions 76 and 172 are disulfide-linked. Zn(2+) is bound by residues His94, His103, His112, and Asp115. Residue His150 participates in Cu cation binding.

It belongs to the Cu-Zn superoxide dismutase family. As to quaternary structure, monomer. It depends on Cu cation as a cofactor. Requires Zn(2+) as cofactor.

It is found in the periplasm. The enzyme catalyses 2 superoxide + 2 H(+) = H2O2 + O2. Functionally, destroys radicals which are normally produced within the cells and which are toxic to biological systems. This is Superoxide dismutase [Cu-Zn] 1 (sodC1) from Salmonella typhimurium (strain 4/74).